A 374-amino-acid chain; its full sequence is 2-aminoethylphosphonate--pyruvate transaminase 1 (374 aa).

Lysine 195 is subject to N6-(pyridoxal phosphate)lysine.

Belongs to the class-V pyridoxal-phosphate-dependent aminotransferase family. PhnW subfamily. Homodimer. It depends on pyridoxal 5'-phosphate as a cofactor.

It carries out the reaction (2-aminoethyl)phosphonate + pyruvate = phosphonoacetaldehyde + L-alanine. In terms of biological role, involved in phosphonate degradation. In Polaromonas sp. (strain JS666 / ATCC BAA-500), this protein is 2-aminoethylphosphonate--pyruvate transaminase 1.